The primary structure comprises 174 residues: ATP-dependent protease subunit HslV (174 aa).

Residue Thr-2 is part of the active site. Na(+) is bound by residues Ala-157, Cys-160, and Thr-163.

It belongs to the peptidase T1B family. HslV subfamily. As to quaternary structure, a double ring-shaped homohexamer of HslV is capped on each side by a ring-shaped HslU homohexamer. The assembly of the HslU/HslV complex is dependent on binding of ATP.

It localises to the cytoplasm. The enzyme catalyses ATP-dependent cleavage of peptide bonds with broad specificity.. With respect to regulation, allosterically activated by HslU binding. Protease subunit of a proteasome-like degradation complex believed to be a general protein degrading machinery. In Shewanella baltica (strain OS195), this protein is ATP-dependent protease subunit HslV.